We begin with the raw amino-acid sequence, 149 residues long: Transcriptional regulator MraZ (149 aa).

SpoVT-AbrB domains lie at Lys7 to His54 and Ala83 to Asn126.

It belongs to the MraZ family. As to quaternary structure, forms oligomers.

The protein localises to the cytoplasm. It is found in the nucleoid. In Rickettsia typhi (strain ATCC VR-144 / Wilmington), this protein is Transcriptional regulator MraZ.